Consider the following 42-residue polypeptide: Crotamine Ile-19 (42 aa).

3 cysteine pairs are disulfide-bonded: cysteine 4-cysteine 36, cysteine 11-cysteine 30, and cysteine 18-cysteine 37.

This sequence belongs to the crotamine-myotoxin family. As to quaternary structure, monomer. Expressed by the venom gland.

It is found in the secreted. Its function is as follows. Cationic peptide that possesses multiple functions. It acts as a cell-penetrating peptide (CPP), and as a potent voltage-gated potassium channel (Kv) inhibitor, it induces severe muscle necrosis by a non-enzymatic mechanism and exhibits antimicrobial activities. It also elicits a short-lasting hyperextension of the hind limb. It does not cause observable tissue damage (whereas the whole venom causes severe myonecrosis accompanied by edema and hemorrhage). In Crotalus durissus ruruima (South American rattlesnake), this protein is Crotamine Ile-19.